Reading from the N-terminus, the 562-residue chain is MTLLSYLSSLCREAILSAFPQIETISPDITQSTKELFGHYQCNDAMKLARTLKMPPRAIAESIVKQISKNNFSSIEIAGAGFINFTFSKEFLNLSLQSYSRDLSSGFRVQDPKKVVIDFSSPNIAKDMHVGHLRSTIIGDCLARIFTFVGHDVLRLNHIGDWGTAFGMLITYLQEESSEDIESLEDLTILYKKAHVRFAEDAEFKKRSQTNVVALQSGDPKARKLWERICEISERAFQKIYNILDIQIEKRGESFYNPFLPEIIEDLEKKNLITVSDEAKCVFHEGFSIPLMVQKRDGGYNYATTDLAAMRYRVEQDHADRIIIVTDMGQSLHFQLLEATALAAGYLPNKDVFSHVGFGLVLDSEGKKFKTRSGENIKLQELLDTAIDQAVATLKKHRPEMSDAEITERAPVLGMNAIKYADLSSHRVSDYVFSFEKMLRFEGNTAMFILYGYVRIQGIKRRLGIEKLSLESAANIQEPSEEALALALLRFPEAIDITLKELCPHFLTDYLYMLTNKFHAFFRDCHIEGSPHQKERLYLCALVEKTLATGMHLLGLQTLDRL.

A 'HIGH' region motif is present at residues 122-132 (PNIAKDMHVGH).

Belongs to the class-I aminoacyl-tRNA synthetase family. Monomer.

It localises to the cytoplasm. The catalysed reaction is tRNA(Arg) + L-arginine + ATP = L-arginyl-tRNA(Arg) + AMP + diphosphate. The protein is Arginine--tRNA ligase of Chlamydia abortus (strain DSM 27085 / S26/3) (Chlamydophila abortus).